Here is a 513-residue protein sequence, read N- to C-terminus: Nitrate transporter 2.2 (513 aa).

12 helical membrane-spanning segments follow: residues 38–58 (WICFFMSFVATFAPASLAPVI), 74–94 (VSAVCGAIAARLFMGIFVDVV), 98–118 (YGAAAAMLMTAPAVFCMALVT), 128–148 (FFIGLSLCMFVCCQFWCGTMF), 158–178 (AIAAGWGNMGGGACHFIMPLI), 196–216 (AFFVPGGIYIVTATLTLLLGI), 247–265 (LGNYRSWILALTYGYSFGV), 281–301 (FGLNLAVAGALGAIFGLMNIF), 323–343 (LWVLWITQTLGGIFCIIMGKV), 351–371 (IVIMIIFSIFCQQACGMHFGI), 383–403 (VSGLVGAGGNVGAAITQAIWF), and 419–439 (FVWMGVQAVALTVAVMFIWFP).

Belongs to the major facilitator superfamily. Nitrate/nitrite porter (TC 2.A.1.8) family.

It localises to the cell membrane. Involved in nitrate transport, but does not seem to be able to mediate transport by its own. Acts as a dual component transporter with NAR2 (system 2). Involved in a high affinity transport specific for nitrate. This chain is Nitrate transporter 2.2, found in Chlamydomonas reinhardtii (Chlamydomonas smithii).